The sequence spans 179 residues: Cell division protein SepF (179 aa).

Positions E18–K55 are disordered. Positions P34 to K55 are enriched in polar residues.

It belongs to the SepF family. As to quaternary structure, homodimer. Interacts with FtsZ.

The protein localises to the cytoplasm. Functionally, cell division protein that is part of the divisome complex and is recruited early to the Z-ring. Probably stimulates Z-ring formation, perhaps through the cross-linking of FtsZ protofilaments. Its function overlaps with FtsA. This Streptococcus pneumoniae (strain ATCC 700669 / Spain 23F-1) protein is Cell division protein SepF.